We begin with the raw amino-acid sequence, 622 residues long: MPIRILPPILANQIAAGEVVERPSSVVKELVENSLDAGADRVEIDIDKGGAKLIRIRDNGSGVAKDELVLALSRHATSKVATLDDLEGINSLGFRGEALASISSVSRLTFTSRTAEQSEAWQAQAEGREMSVTIKPAAHPVGTTVEVVDLFFNTPARRKFMRSEKTEFAHIDELVRRIALSRFDVTLILRHNGKVVRQYKAANTVAEQERRLAAVCGSPFMHYALAVESEHSDVRLWGWLATPEGARPQNDLQYTYVNGRMMRDKLINHAIRQAYDELLPADRFAAYVLYIELDPRQVDVNVHPAKHEVRFHQARLIHDFIFQALFTALRQQGAASDEPLAETLVELPVSAPIEYPGQAPRAEWYGAEHNYRAPAREVREGSSTGRAGNYQPPEPPSREAMRGMGSLLTTLPAVQGTPLAEAETAPVAAAVPAKAGAWRALTLVEQAYLLLERDNRLALLSLVRAERLLLRHWLLETWGQGLAAQPLLLPVSFKLPKNLVALVEQQDRLLKRMGLELKSGGRDTMILTRVPALLRQTDLVRLLPELLQLIESGSDSDAGQQAEVLCQWLVEQGISREKVYDFATANRLLTELVADFSDQLANVRMVRPLALASVLAEFADGH.

Positions 376–401 (REVREGSSTGRAGNYQPPEPPSREAM) are disordered.

It belongs to the DNA mismatch repair MutL/HexB family.

This protein is involved in the repair of mismatches in DNA. It is required for dam-dependent methyl-directed DNA mismatch repair. May act as a 'molecular matchmaker', a protein that promotes the formation of a stable complex between two or more DNA-binding proteins in an ATP-dependent manner without itself being part of a final effector complex. The protein is DNA mismatch repair protein MutL of Aeromonas hydrophila subsp. hydrophila (strain ATCC 7966 / DSM 30187 / BCRC 13018 / CCUG 14551 / JCM 1027 / KCTC 2358 / NCIMB 9240 / NCTC 8049).